We begin with the raw amino-acid sequence, 105 residues long: Mitomycin resistance protein McrB (105 aa).

Involved in mitomycin resistance. May operate with McrA or may be a type of transcriptional activator protein. In Streptomyces lavendulae, this protein is Mitomycin resistance protein McrB (mcrB).